A 529-amino-acid polypeptide reads, in one-letter code: Bifunctional purine biosynthesis protein PurH (529 aa).

An MGS-like domain is found at 1–148 (MQQRRPVRRA…KNHKDVAIVV (148 aa)).

The protein belongs to the PurH family.

The catalysed reaction is (6R)-10-formyltetrahydrofolate + 5-amino-1-(5-phospho-beta-D-ribosyl)imidazole-4-carboxamide = 5-formamido-1-(5-phospho-D-ribosyl)imidazole-4-carboxamide + (6S)-5,6,7,8-tetrahydrofolate. It carries out the reaction IMP + H2O = 5-formamido-1-(5-phospho-D-ribosyl)imidazole-4-carboxamide. It functions in the pathway purine metabolism; IMP biosynthesis via de novo pathway; 5-formamido-1-(5-phospho-D-ribosyl)imidazole-4-carboxamide from 5-amino-1-(5-phospho-D-ribosyl)imidazole-4-carboxamide (10-formyl THF route): step 1/1. It participates in purine metabolism; IMP biosynthesis via de novo pathway; IMP from 5-formamido-1-(5-phospho-D-ribosyl)imidazole-4-carboxamide: step 1/1. This is Bifunctional purine biosynthesis protein PurH from Salmonella newport (strain SL254).